A 248-amino-acid chain; its full sequence is 3-deoxy-manno-octulosonate cytidylyltransferase (248 aa).

Belongs to the KdsB family.

Its subcellular location is the cytoplasm. The enzyme catalyses 3-deoxy-alpha-D-manno-oct-2-ulosonate + CTP = CMP-3-deoxy-beta-D-manno-octulosonate + diphosphate. The protein operates within nucleotide-sugar biosynthesis; CMP-3-deoxy-D-manno-octulosonate biosynthesis; CMP-3-deoxy-D-manno-octulosonate from 3-deoxy-D-manno-octulosonate and CTP: step 1/1. It participates in bacterial outer membrane biogenesis; lipopolysaccharide biosynthesis. Its function is as follows. Activates KDO (a required 8-carbon sugar) for incorporation into bacterial lipopolysaccharide in Gram-negative bacteria. This chain is 3-deoxy-manno-octulosonate cytidylyltransferase, found in Photobacterium profundum (strain SS9).